The following is a 68-amino-acid chain: Large ribosomal subunit protein uL30 (68 aa).

This sequence belongs to the universal ribosomal protein uL30 family. As to quaternary structure, part of the 50S ribosomal subunit.

The chain is Large ribosomal subunit protein uL30 from Bartonella tribocorum (strain CIP 105476 / IBS 506).